A 184-amino-acid chain; its full sequence is Isopentenyl-diphosphate Delta-isomerase (184 aa).

Mn(2+) contacts are provided by H26 and H33. Residues 31–165 (PLHLAFSCYL…PSAFSPWLGL (135 aa)) enclose the Nudix hydrolase domain. C68 is an active-site residue. H70 lines the Mn(2+) pocket. Residue E88 participates in Mg(2+) binding. Residues E115 and E117 each contribute to the Mn(2+) site. The active site involves E117.

The protein belongs to the IPP isomerase type 1 family. Requires Mg(2+) as cofactor. Mn(2+) is required as a cofactor.

It is found in the cytoplasm. It catalyses the reaction isopentenyl diphosphate = dimethylallyl diphosphate. It functions in the pathway isoprenoid biosynthesis; dimethylallyl diphosphate biosynthesis; dimethylallyl diphosphate from isopentenyl diphosphate: step 1/1. Functionally, catalyzes the 1,3-allylic rearrangement of the homoallylic substrate isopentenyl (IPP) to its highly electrophilic allylic isomer, dimethylallyl diphosphate (DMAPP). This Paenarthrobacter aurescens (strain TC1) protein is Isopentenyl-diphosphate Delta-isomerase.